The following is a 1469-amino-acid chain: snRNA-activating protein complex subunit 4 (1469 aa).

The interval 16–82 is disordered; sequence ELERILDPGS…DPKDKTLPED (67 aa). Over residues 24-36 the composition is skewed to low complexity; the sequence is GSSGSHVEISESS. A compositionally biased stretch (acidic residues) spans 37–53; sequence LESDSEADSLPSEDLDP. Ser-68 carries the phosphoserine modification. Positions 84-133 are SNAPC5-binding; sequence ETCLQLNMVYQEVIQEKLAEANLLLAQNREQQEELMRDLAGSKGTKVKDG. The Myb-like 1 domain maps to 250–288; the sequence is EEALLGNRLDSHDWEKISNINFEGSRSAEEIRKFWQNSE. Residues 289-343 form the HTH myb-type 1 domain; sequence HPSINKQEWSREEEERLQAIAAAHGHLEWQKIAEELGTSRSAFQCLQKFQQHNKA. A DNA-binding region (H-T-H motif) is located at residues 317-341; that stretch reads WQKIAEELGTSRSAFQCLQKFQQHN. Residues 344-395 enclose the Myb-like 2 domain; it reads LKRKEWTEEEDRMLTQLVQEMRVGSHIPYRRIVYYMEGRDSMQLIYRWTKSL. HTH myb-type domains follow at residues 396–451 and 452–503; these read DPGL…HFSL and KKGR…GKKQ. 2 DNA-binding regions (H-T-H motif) span residues 424-447 and 476-499; these read WFKI…LRRL and WAKI…KIMM. Disordered stretches follow at residues 501 to 558, 577 to 661, 685 to 710, 834 to 894, 932 to 981, 1001 to 1051, 1121 to 1167, and 1184 to 1266; these read KKQG…GDRA, QSTS…QALE, RSCT…SGDS, ASSS…KTVS, PLPH…DKRL, PAAS…PSPT, AAQG…PAEA, and IPEP…GPEK. The span at 503–516 shows a compositional bias: basic residues; that stretch reads QGLRRRRRRARHSV. A compositionally biased stretch (low complexity) spans 519–541; it reads SSTSSSGSSSGSSGGSSSSSSSS. Position 599 is a phosphoserine (Ser-599). The span at 602-618 shows a compositional bias: polar residues; that stretch reads KGSSASQGGSKEASTTA. Ser-626 is subject to Phosphoserine. Residues 932-944 show a composition bias toward pro residues; sequence PLPHTPHGRPAPG. Positions 951–968 are enriched in low complexity; the sequence is PLSGPGAPAAAKPGTSGS. A compositionally biased stretch (polar residues) spans 1014–1029; that stretch reads ISVSCPESGLGQSQAP. Residues 1039-1051 show a composition bias toward pro residues; sequence EAPPFLPAAPSPT. Phosphothreonine is present on Thr-1157. The segment covering 1184-1195 has biased composition (basic and acidic residues); the sequence is IPEPRTSSHADP. Ser-1224 is subject to Phosphoserine. The segment at 1281-1393 is SNAPC2-binding; sequence ATQQWLGGQR…QGVRTTLSVP (113 aa). Ser-1398, Ser-1400, and Ser-1440 each carry phosphoserine. Positions 1430 to 1449 are disordered; the sequence is APDSGKCSASSCLDTSNDPD. Positions 1436–1445 are enriched in polar residues; it reads CSASSCLDTS.

As to quaternary structure, part of the SNAPc complex composed of 5 subunits: SNAPC1, SNAPC2, SNAPC3, SNAPC4 and SNAPC5. SNAPC4 interacts with SNAPC1, SNAPC2, SNAPC5, BRF2 and TBP.

The protein resides in the nucleus. Its function is as follows. Part of the SNAPc complex required for the transcription of both RNA polymerase II and III small-nuclear RNA genes. Binds to the proximal sequence element (PSE), a non-TATA-box basal promoter element common to these 2 types of genes. Recruits TBP and BRF2 to the U6 snRNA TATA box. The protein is snRNA-activating protein complex subunit 4 of Homo sapiens (Human).